Reading from the N-terminus, the 183-residue chain is Peptidyl-prolyl cis-trans isomerase 11 (183 aa).

Residues 20–182 enclose the PPIase cyclophilin-type domain; the sequence is FLEVTAGGAP…LPIVVVQCGQ (163 aa).

This sequence belongs to the cyclophilin-type PPIase family. PPIase H subfamily.

The catalysed reaction is [protein]-peptidylproline (omega=180) = [protein]-peptidylproline (omega=0). Functionally, PPIases accelerate the folding of proteins. It catalyzes the cis-trans isomerization of proline imidic peptide bonds in oligopeptides. This is Peptidyl-prolyl cis-trans isomerase 11 (cyn-11) from Caenorhabditis elegans.